The sequence spans 274 residues: Energy-coupling factor transporter ATP-binding protein EcfA1 (274 aa).

The ABC transporter domain maps to 11-245; the sequence is IELKNVKFKY…ERVIEIAKID (235 aa). 45-52 provides a ligand contact to ATP; sequence GHNGSGKS.

Belongs to the ABC transporter superfamily. Energy-coupling factor EcfA family. Forms a stable energy-coupling factor (ECF) transporter complex composed of 2 membrane-embedded substrate-binding proteins (S component), 2 ATP-binding proteins (A component) and 2 transmembrane proteins (T component).

The protein resides in the cell membrane. ATP-binding (A) component of a common energy-coupling factor (ECF) ABC-transporter complex. Unlike classic ABC transporters this ECF transporter provides the energy necessary to transport a number of different substrates. The polypeptide is Energy-coupling factor transporter ATP-binding protein EcfA1 (Mycoplasma mobile (strain ATCC 43663 / 163K / NCTC 11711) (Mesomycoplasma mobile)).